The chain runs to 383 residues: Homoserine O-succinyltransferase (383 aa).

In terms of domain architecture, AB hydrolase-1 spans 51–361; that stretch reads NALLICHALS…ESDFGHDAFL (311 aa). Serine 157 (nucleophile) is an active-site residue. A substrate-binding site is contributed by arginine 227. Residues aspartate 324 and histidine 357 contribute to the active site. Aspartate 358 contacts substrate.

It belongs to the AB hydrolase superfamily. MetX family. Homodimer.

It localises to the cytoplasm. The catalysed reaction is L-homoserine + succinyl-CoA = O-succinyl-L-homoserine + CoA. It functions in the pathway amino-acid biosynthesis; L-methionine biosynthesis via de novo pathway; O-succinyl-L-homoserine from L-homoserine: step 1/1. Functionally, transfers a succinyl group from succinyl-CoA to L-homoserine, forming succinyl-L-homoserine. This Teredinibacter turnerae (strain ATCC 39867 / T7901) protein is Homoserine O-succinyltransferase.